A 291-amino-acid polypeptide reads, in one-letter code: Beta-lactamase CTX-M-14 (291 aa).

Residues 1 to 28 (MVTKRVQRMMFAAAACIPLLLGSAPLYA) form the signal peptide. Residue Ser73 is the Nucleophile; acyl-ester intermediate of the active site. A beta-lactam is bound by residues Lys76, Ser133, Glu169, and Ser240.

Belongs to the class-A beta-lactamase family. In terms of assembly, monomer.

It localises to the secreted. It carries out the reaction a beta-lactam + H2O = a substituted beta-amino acid. With respect to regulation, inhibited by the beta-lactamase-blocking agents clavulanic acid, tazobactam and sulbactam. Its function is as follows. Extended-spectrum beta-lactamase (ESBL) which confers resistance to penicillins, as well as first, second, and third-generation cephalosporins. Has cefotaxime-hydrolyzing activity. This Escherichia coli protein is Beta-lactamase CTX-M-14.